Consider the following 159-residue polypeptide: Cyclic pyranopterin monophosphate synthase (159 aa).

Substrate contacts are provided by residues 75-77 and 113-114; these read LCH and ME. D128 is an active-site residue.

Belongs to the MoaC family. As to quaternary structure, homohexamer; trimer of dimers.

It carries out the reaction (8S)-3',8-cyclo-7,8-dihydroguanosine 5'-triphosphate = cyclic pyranopterin phosphate + diphosphate. It participates in cofactor biosynthesis; molybdopterin biosynthesis. Catalyzes the conversion of (8S)-3',8-cyclo-7,8-dihydroguanosine 5'-triphosphate to cyclic pyranopterin monophosphate (cPMP). The sequence is that of Cyclic pyranopterin monophosphate synthase from Vibrio vulnificus (strain YJ016).